Here is a 634-residue protein sequence, read N- to C-terminus: Chaperone protein HtpG (634 aa).

The a; substrate-binding stretch occupies residues 1–342; it reads MSVETQKETL…SNDLSLNVSR (342 aa). The tract at residues 343–559 is b; that stretch reads EILQKDPVID…EQDLGLQMRQ (217 aa). Residues 560 to 634 form a c region; that stretch reads ILEASGQKVP…LNKLLVELSA (75 aa).

Belongs to the heat shock protein 90 family. In terms of assembly, homodimer.

Its subcellular location is the cytoplasm. Its function is as follows. Molecular chaperone. Has ATPase activity. The polypeptide is Chaperone protein HtpG (Pseudomonas aeruginosa (strain ATCC 15692 / DSM 22644 / CIP 104116 / JCM 14847 / LMG 12228 / 1C / PRS 101 / PAO1)).